Here is a 255-residue protein sequence, read N- to C-terminus: Endonuclease V (255 aa).

2 residues coordinate Mg(2+): Asp42 and Asp110.

This sequence belongs to the endonuclease V family. It depends on Mg(2+) as a cofactor.

The protein localises to the cytoplasm. It catalyses the reaction Endonucleolytic cleavage at apurinic or apyrimidinic sites to products with a 5'-phosphate.. In terms of biological role, DNA repair enzyme involved in the repair of deaminated bases. Selectively cleaves double-stranded DNA at the second phosphodiester bond 3' to a deoxyinosine leaving behind the intact lesion on the nicked DNA. This chain is Endonuclease V, found in Aeropyrum pernix (strain ATCC 700893 / DSM 11879 / JCM 9820 / NBRC 100138 / K1).